The chain runs to 116 residues: NADH dehydrogenase [ubiquinone] iron-sulfur protein 6, mitochondrial (116 aa).

The transit peptide at 1–20 directs the protein to the mitochondrion; sequence MAAVLTFRRLLTLPRAARGF. Lys90 and Lys112 each carry N6-acetyllysine.

Belongs to the complex I NDUFS6 subunit family. As to quaternary structure, mammalian complex I is composed of 45 different subunits. This is a component of the iron-sulfur (IP) fragment of the enzyme.

The protein resides in the mitochondrion inner membrane. Accessory subunit of the mitochondrial membrane respiratory chain NADH dehydrogenase (Complex I), that is believed not to be involved in catalysis. Complex I functions in the transfer of electrons from NADH to the respiratory chain. The immediate electron acceptor for the enzyme is believed to be ubiquinone. The sequence is that of NADH dehydrogenase [ubiquinone] iron-sulfur protein 6, mitochondrial (Ndufs6) from Mus musculus (Mouse).